A 521-amino-acid polypeptide reads, in one-letter code: Ribonuclease Y 1 (521 aa).

Residues 1-21 traverse the membrane as a helical segment; it reads MEIVISAIIGLLIGGTVVFVI. Residues 51–87 are disordered; sequence IKKESENKAKDFESRARKNVEQDIHKQKSTLKNKESQ. The KH domain occupies 211-271; sequence TVSVLALPND…VRRELARRTI (61 aa). The HD domain maps to 337–430; it reads ALNQSLEVAT…VHAAYTLSSS (94 aa).

The protein belongs to the RNase Y family.

Its subcellular location is the cell membrane. Functionally, endoribonuclease that initiates mRNA decay. The chain is Ribonuclease Y 1 from Bdellovibrio bacteriovorus (strain ATCC 15356 / DSM 50701 / NCIMB 9529 / HD100).